Consider the following 1588-residue polypeptide: Paternally-expressed gene 3 protein (1588 aa).

In terms of domain architecture, SCAN box spans 46–128 (HQRFRNLIYV…TLLENYKEMY (83 aa)). Disordered stretches follow at residues 128–230 (YQPE…ESYQ), 266–306 (DGHS…RRGI), and 319–349 (KFIK…MSDD). Residues 129 to 142 (QPEDDNNSDVTSDD) are compositionally biased toward acidic residues. Basic and acidic residues-rich tracts occupy residues 143-152 (DMTRNRRESS), 161-182 (SGDR…DRWS), 206-225 (FEMD…RSQD), and 295-306 (PEAKKSTHRRGI). 3 consecutive C2H2-type zinc fingers follow at residues 454-476 (YVCD…QIMH), 507-529 (FECK…RKIH), and 565-587 (YECR…QKIH). Residues 588 to 607 (FGDDKDNEREHERERERGET) show a composition bias toward basic and acidic residues. The interval 588–610 (FGDDKDNEREHERERERGETFRP) is disordered. A C2H2-type 4 zinc finger spans residues 627 to 649 (YECKVCGETFLHSSSLKEHQKIH). Residues 838-930 (LVASKPPRSH…EFSVPSSNVR (93 aa)) are disordered. Positions 868–881 (LNDKRQKIPARENP) are enriched in basic and acidic residues. Residues 969–991 (YECQECGECFAHSSDLTEHQKIH) form a C2H2-type 5 zinc finger. Positions 1056–1104 (EKSHGEESQGENTDGEETHSEETHGQETIEDPVIQGSDMEDPQKDDPDD) are disordered. The segment covering 1071-1082 (EETHSEETHGQE) has biased composition (basic and acidic residues). 5 C2H2-type zinc fingers span residues 1107-1129 (YECE…QKVH), 1163-1185 (YECP…QRIH), 1225-1247 (IRCL…MRLH), 1282-1304 (FECA…VTVH), and 1332-1354 (YECK…KELH). The interval 1393–1495 (EAAEPEVEAX…GIEDPEEGED (103 aa)) is disordered. Acidic residues predominate over residues 1395-1415 (AEPEVEAXEPEVEAAEPEVEA). Tandem repeats lie at residues 1397–1403 (PEVEAXE), 1404–1410 (PEVEAAE), 1411–1417 (PEVEAAE), 1418–1422 (PNGEA), 1425–1429 (PDGEA), 1432–1436 (PIGEA), and 1439–1443 (PNGEA). Positions 1397–1417 (PEVEAXEPEVEAAEPEVEAAE) are 3 X 7 AA repeat of P-E-V-E-A-A-E. A 4 X 5 AA repeat of P-X-G-E-A region spans residues 1418–1443 (PNGEAEGPDGEAAEPIGEAGQPNGEA). Acidic residues-rich tracts occupy residues 1449–1466 (DADE…ERAE) and 1475–1495 (PEGD…EGED). 2 consecutive C2H2-type zinc fingers follow at residues 1505 to 1527 (YDCH…LKTH) and 1564 to 1586 (FKCD…QNTH).

It belongs to the krueppel C2H2-type zinc-finger protein family. In terms of assembly, homodimer. Interacts with SIAH1A and SIAH2. Interacts with TRAF2.

It is found in the nucleus. Its subcellular location is the cytoplasm. Induces apoptosis in cooperation with SIAH1A. Acts as a mediator between p53/TP53 and BAX in a neuronal death pathway that is activated by DNA damage. Acts synergistically with TRAF2 and inhibits TNF induced apoptosis through activation of NF-kappa-B. This is Paternally-expressed gene 3 protein (PEG3) from Pan paniscus (Pygmy chimpanzee).